A 233-amino-acid polypeptide reads, in one-letter code: Small ribosomal subunit protein uS3 (233 aa).

The region spanning 39–107 is the KH type-2 domain; that stretch reads VREFLKKRLG…PVHVNIEEVR (69 aa). The tract at residues 212 to 233 is disordered; sequence VQATPAAPEKKMRKGARNAAAN.

Belongs to the universal ribosomal protein uS3 family. In terms of assembly, part of the 30S ribosomal subunit. Forms a tight complex with proteins S10 and S14.

In terms of biological role, binds the lower part of the 30S subunit head. Binds mRNA in the 70S ribosome, positioning it for translation. In Chromobacterium violaceum (strain ATCC 12472 / DSM 30191 / JCM 1249 / CCUG 213 / NBRC 12614 / NCIMB 9131 / NCTC 9757 / MK), this protein is Small ribosomal subunit protein uS3.